The chain runs to 732 residues: Segment polarity protein dishevelled homolog DVL-2 (732 aa).

The DIX domain occupies M1–E82. Disordered regions lie at residues S81–T181 and E195–S237. Positions D98 to A111 are enriched in pro residues. The span at M146–T157 shows a compositional bias: basic and acidic residues. Polar residues predominate over residues R202–S213. Positions L215 to P227 are enriched in basic residues. The region spanning T250–A335 is the PDZ domain. The region spanning P424–D498 is the DEP domain. Low complexity-rich tracts occupy residues M570–S589, K612–R629, and P637–P647. The tract at residues M570–A660 is disordered.

It belongs to the DSH family. In terms of assembly, can form homomultimers. Interacts with prickle1. Interacts (via the PDZ domain) with ccdc88c/dal and dact1-B/dpr. Interacts (via the DIX domain) with ARP/Axin-related protein and dact1-A/frodo. Interacts with sdc4, possibly via fz7. Interacts directly (via the DEP domain) with efnb1/ephrin-B1. May interact indirectly with the phosphorylated ephrin receptors ephb1 and ephb2 via SH domain-containing adapters. Phosphorylated. Phosphorylation is controlled by frizzled proteins, correlates with the onset of embryo dorsalizing events and is higher in the dorsal half of early cleavage embryos. Phosphorylated on tyrosine residues in response to association with efnb1/ephrin-B1.

The protein localises to the cytoplasm. Its subcellular location is the cytoplasmic vesicle. The protein resides in the cell projection. It localises to the cilium. It is found in the nucleus. The protein localises to the cell membrane. Its function is as follows. Involved in at least 2 independent signaling cascades, controlling cell fate via canonical Wnt signaling and cell polarity via a planar cell polarity (PCP) cascade. Acts synergistically with dal/dapple-like to activate Wnt signaling, stabilizing ctnnb1/beta-catenin and leading to dorsal axis formation. Also prevents degradation of ctnnb1/beta-catenin by displacing gsk3 from a complex with ARP/Axin-related protein. Has an additional role in anterior-posterior (A/P) axis formation, specifying different neuroectodermal cell fates along the A/P axis in a dose-dependent manner by activating several early patterning genes. In the PCP pathway, required at the cell membrane for PCP-mediated neural and mesodermal convergent extension during gastrulation and subsequent neural tube closure, acting to activate jnk. Also involved in blastopore closure and archenteron elongation during early, but not late, gastrulation. Associates with ephrin receptors and ligands and acts as part of a downstream PCP pathway to mediate ephrin-mediated cell repulsion via activation of rhoa. Required for efnb1/ephrin-B1-driven movement of non-retinal progenitor cells into the retina during eye field formation. Patterns the hindbrain. Required for ciliogenesis. Controls the docking of basal bodies to the apical plasma membrane; mediates the activation, but not localization of rhoa at the apical surface of ciliated cells during basal body docking. Furthermore, required for the association of basal bodies with membrane-bound vesicles and the vesicle-trafficking protein exoc4/sec8, and this association is in turn required for basal body docking. Once basal bodies are docked, required for the planar polarization of basal bodies that underlies ciliary beating and the directional fluid flow across ciliated epithelia. This chain is Segment polarity protein dishevelled homolog DVL-2, found in Xenopus tropicalis (Western clawed frog).